Here is a 428-residue protein sequence, read N- to C-terminus: Elongation factor 1-alpha (428 aa).

A tr-type G domain is found at 5-215; it reads KPHVNIVFIG…ALDQIPEPPK (211 aa). The segment at 14–21 is G1; sequence GHVDHGKS. 14–21 lines the GTP pocket; that stretch reads GHVDHGKS. Position 21 (S21) interacts with Mg(2+). A G2 region spans residues 68 to 72; that stretch reads GITID. A G3 region spans residues 89 to 92; the sequence is DAPG. GTP-binding positions include 89 to 93 and 144 to 147; these read DAPGH and NKMD. The segment at 144-147 is G4; the sequence is NKMD. A G5 region spans residues 181-183; sequence SAW.

This sequence belongs to the TRAFAC class translation factor GTPase superfamily. Classic translation factor GTPase family. EF-Tu/EF-1A subfamily.

The protein resides in the cytoplasm. It carries out the reaction GTP + H2O = GDP + phosphate + H(+). In terms of biological role, GTP hydrolase that promotes the GTP-dependent binding of aminoacyl-tRNA to the A-site of ribosomes during protein biosynthesis. The chain is Elongation factor 1-alpha from Thermococcus gammatolerans (strain DSM 15229 / JCM 11827 / EJ3).